The primary structure comprises 1129 residues: Ubiquitin carboxyl-terminal hydrolase 7 (1129 aa).

The MATH domain occupies 29-169 (EGHLALDIER…DDVIRLRCRF (141 aa)). Residues 190-500 (IGLRNQGATC…SAYMLVYVRD (311 aa)) form the USP domain. Catalysis depends on Cys-199, which acts as the Nucleophile. His-439 functions as the Proton acceptor in the catalytic mechanism.

Belongs to the peptidase C19 family.

The protein resides in the nucleus. The catalysed reaction is Thiol-dependent hydrolysis of ester, thioester, amide, peptide and isopeptide bonds formed by the C-terminal Gly of ubiquitin (a 76-residue protein attached to proteins as an intracellular targeting signal).. In terms of biological role, hydrolase that deubiquitinates target proteins. The protein is Ubiquitin carboxyl-terminal hydrolase 7 of Caenorhabditis briggsae.